The chain runs to 498 residues: Cyclin-L1 (498 aa).

Cyclin-like stretches follow at residues glutamate 68–lysine 169 and lysine 182–lysine 266. The interval leucine 294 to arginine 498 is disordered. The segment covering asparagine 311–serine 320 has biased composition (polar residues). The segment covering serine 321 to asparagine 341 has biased composition (basic and acidic residues). Positions lysine 366–serine 396 are RS. The segment covering asparagine 367–histidine 387 has biased composition (basic residues). A compositionally biased stretch (low complexity) spans serine 388–arginine 402. Phosphoserine occurs at positions 409 and 412. Residues arginine 415–arginine 426 show a composition bias toward basic and acidic residues. Residues histidine 427–serine 440 are compositionally biased toward basic residues. Positions asparagine 441–histidine 478 are enriched in basic and acidic residues. Residues glycine 479–arginine 498 show a composition bias toward basic residues.

Belongs to the cyclin family. Cyclin L subfamily.

It localises to the nucleus speckle. Its subcellular location is the nucleus. The protein localises to the nucleoplasm. In terms of biological role, involved in pre-mRNA splicing. The protein is Cyclin-L1 (ccnl1) of Danio rerio (Zebrafish).